Reading from the N-terminus, the 451-residue chain is Phosphoglucosamine mutase (451 aa).

Ser103 (phosphoserine intermediate) is an active-site residue. Residues Ser103, Asp243, Asp245, and Asp247 each coordinate Mg(2+). Phosphoserine is present on Ser103.

The protein belongs to the phosphohexose mutase family. The cofactor is Mg(2+). Activated by phosphorylation.

The catalysed reaction is alpha-D-glucosamine 1-phosphate = D-glucosamine 6-phosphate. Catalyzes the conversion of glucosamine-6-phosphate to glucosamine-1-phosphate. In Limosilactobacillus reuteri subsp. reuteri (strain JCM 1112) (Lactobacillus reuteri), this protein is Phosphoglucosamine mutase.